Consider the following 430-residue polypeptide: Adenylosuccinate synthetase (430 aa).

Residues 12 to 18 (GDEGKGK) and 40 to 42 (GHT) each bind GTP. D13 acts as the Proton acceptor in catalysis. 2 residues coordinate Mg(2+): D13 and G40. IMP is bound by residues 13–16 (DEGK), 38–41 (NAGH), T130, R144, Q225, T240, and R304. The Proton donor role is filled by H41. 300-306 (STTGRPR) contacts substrate. Residues R306, 332–334 (KLD), and 414–416 (SVG) contribute to the GTP site.

It belongs to the adenylosuccinate synthetase family. Homodimer. Requires Mg(2+) as cofactor.

It localises to the cytoplasm. It carries out the reaction IMP + L-aspartate + GTP = N(6)-(1,2-dicarboxyethyl)-AMP + GDP + phosphate + 2 H(+). It functions in the pathway purine metabolism; AMP biosynthesis via de novo pathway; AMP from IMP: step 1/2. Its function is as follows. Plays an important role in the de novo pathway of purine nucleotide biosynthesis. Catalyzes the first committed step in the biosynthesis of AMP from IMP. This is Adenylosuccinate synthetase from Pelobacter propionicus (strain DSM 2379 / NBRC 103807 / OttBd1).